Consider the following 80-residue polypeptide: MAVKKPENLSFEAAIEELDSVVNQLESGDLPLEDALKKFERGISLARAGQEKLTQAEQRVEILLQADDNAELTPFDGQDD.

This sequence belongs to the XseB family. As to quaternary structure, heterooligomer composed of large and small subunits.

It is found in the cytoplasm. The enzyme catalyses Exonucleolytic cleavage in either 5'- to 3'- or 3'- to 5'-direction to yield nucleoside 5'-phosphates.. Its function is as follows. Bidirectionally degrades single-stranded DNA into large acid-insoluble oligonucleotides, which are then degraded further into small acid-soluble oligonucleotides. In Aliivibrio fischeri (strain ATCC 700601 / ES114) (Vibrio fischeri), this protein is Exodeoxyribonuclease 7 small subunit.